A 120-amino-acid polypeptide reads, in one-letter code: Large ribosomal subunit protein uL22 (120 aa).

It belongs to the universal ribosomal protein uL22 family. In terms of assembly, part of the 50S ribosomal subunit.

Its function is as follows. This protein binds specifically to 23S rRNA; its binding is stimulated by other ribosomal proteins, e.g. L4, L17, and L20. It is important during the early stages of 50S assembly. It makes multiple contacts with different domains of the 23S rRNA in the assembled 50S subunit and ribosome. The globular domain of the protein is located near the polypeptide exit tunnel on the outside of the subunit, while an extended beta-hairpin is found that lines the wall of the exit tunnel in the center of the 70S ribosome. The polypeptide is Large ribosomal subunit protein uL22 (Corynebacterium kroppenstedtii (strain DSM 44385 / JCM 11950 / CIP 105744 / CCUG 35717)).